The following is a 328-amino-acid chain: Porphobilinogen deaminase (328 aa).

An S-(dipyrrolylmethanemethyl)cysteine modification is found at C250.

Belongs to the HMBS family. As to quaternary structure, monomer. It depends on dipyrromethane as a cofactor.

It carries out the reaction 4 porphobilinogen + H2O = hydroxymethylbilane + 4 NH4(+). Its pathway is porphyrin-containing compound metabolism; protoporphyrin-IX biosynthesis; coproporphyrinogen-III from 5-aminolevulinate: step 2/4. Its function is as follows. Tetrapolymerization of the monopyrrole PBG into the hydroxymethylbilane pre-uroporphyrinogen in several discrete steps. This chain is Porphobilinogen deaminase, found in Burkholderia ambifaria (strain ATCC BAA-244 / DSM 16087 / CCUG 44356 / LMG 19182 / AMMD) (Burkholderia cepacia (strain AMMD)).